We begin with the raw amino-acid sequence, 120 residues long: Photosystem II extrinsic protein U (120 aa).

Positions M1 to A29 are cleaved as a signal peptide.

This sequence belongs to the PsbU family. In terms of assembly, PSII is composed of 1 copy each of membrane proteins PsbA, PsbB, PsbC, PsbD, PsbE, PsbF, PsbH, PsbI, PsbJ, PsbK, PsbL, PsbM, PsbT, PsbX, PsbY, Psb30/Ycf12, peripheral proteins PsbO, CyanoQ (PsbQ), PsbU, PsbV and a large number of cofactors. It forms dimeric complexes.

Its subcellular location is the cellular thylakoid membrane. Its function is as follows. One of the extrinsic, lumenal subunits of photosystem II (PSII). PSII is a light-driven water plastoquinone oxidoreductase, using light energy to abstract electrons from H(2)O, generating a proton gradient subsequently used for ATP formation. The extrinsic proteins stabilize the structure of photosystem II oxygen-evolving complex (OEC), the ion environment of oxygen evolution and protect the OEC against heat-induced inactivation. This chain is Photosystem II extrinsic protein U, found in Prochlorococcus marinus (strain MIT 9313).